Reading from the N-terminus, the 288-residue chain is MNPVFLKIGPIELHYYGLMYAIAFFVGISLGKKIAKERNFDLDLVENYAFVAIISGLIGGRLYYILFNLPYYLQNPFEILAVWHGGMAIHGGILGGIAGTLIFAKIKKINPLILGDFAAGPFILGQAIGRIGNFMNGEVHGVPTFTPFSVIFNVKPKFYEWYTYYQSLSISDKANYPDLVPWGVVFPTSSPAGSEFPNLALHPAMLYELILNLIGFFIIWFILRKKENKASGYMWWWYIIIYSINRIIVSFFRVEDLMFFNFRAPHVISIILIAVSIFFLKKDNKKVF.

Transmembrane regions (helical) follow at residues 8–28 (IGPI…FVGI), 49–69 (AFVA…LFNL), 79–99 (ILAV…GIAG), and 109–129 (INPL…QAIG). An a 1,2-diacyl-sn-glycero-3-phospho-(1'-sn-glycerol)-binding site is contributed by Arg130. The next 3 membrane-spanning stretches (helical) occupy residues 203-223 (PAML…WFIL), 232-252 (GYMW…VSFF), and 259-279 (FFNF…SIFF).

Belongs to the Lgt family.

It is found in the cell inner membrane. The enzyme catalyses L-cysteinyl-[prolipoprotein] + a 1,2-diacyl-sn-glycero-3-phospho-(1'-sn-glycerol) = an S-1,2-diacyl-sn-glyceryl-L-cysteinyl-[prolipoprotein] + sn-glycerol 1-phosphate + H(+). It functions in the pathway protein modification; lipoprotein biosynthesis (diacylglyceryl transfer). Catalyzes the transfer of the diacylglyceryl group from phosphatidylglycerol to the sulfhydryl group of the N-terminal cysteine of a prolipoprotein, the first step in the formation of mature lipoproteins. The polypeptide is Phosphatidylglycerol--prolipoprotein diacylglyceryl transferase (Fusobacterium nucleatum subsp. nucleatum (strain ATCC 25586 / DSM 15643 / BCRC 10681 / CIP 101130 / JCM 8532 / KCTC 2640 / LMG 13131 / VPI 4355)).